A 187-amino-acid polypeptide reads, in one-letter code: UPF0301 protein ECA3925 (187 aa).

It belongs to the UPF0301 (AlgH) family.

The sequence is that of UPF0301 protein ECA3925 from Pectobacterium atrosepticum (strain SCRI 1043 / ATCC BAA-672) (Erwinia carotovora subsp. atroseptica).